The chain runs to 344 residues: 5,10-methenyltetrahydromethanopterin hydrogenase (344 aa).

This sequence belongs to the HMD family. In terms of assembly, homotetramer.

It carries out the reaction 5,10-methenyl-5,6,7,8-tetrahydromethanopterin + H2 = 5,10-methylenetetrahydromethanopterin + H(+). The protein operates within one-carbon metabolism; methanogenesis from CO(2); 5,10-methylene-5,6,7,8-tetrahydromethanopterin from 5,10-methenyl-5,6,7,8-tetrahydromethanopterin (hydrogen route): step 1/1. Activity requires salt; 100 mM sodium or potassium salts of chloride, phosphate or sulfate are equally effective. Inactivated by O(2). Catalyzes the reversible reduction of methenyl-H(4)MPT(+) to methylene-H(4)MPT. This is 5,10-methenyltetrahydromethanopterin hydrogenase from Methanothermobacter marburgensis (strain ATCC BAA-927 / DSM 2133 / JCM 14651 / NBRC 100331 / OCM 82 / Marburg) (Methanobacterium thermoautotrophicum).